The primary structure comprises 486 residues: Glutamate--tRNA ligase (486 aa).

The 'HIGH' region signature appears at 11 to 21 (PSPTGLLHIGN). The short motif at 255 to 259 (KLSKR) is the 'KMSKS' region element. Lys258 lines the ATP pocket.

It belongs to the class-I aminoacyl-tRNA synthetase family. Glutamate--tRNA ligase type 1 subfamily. In terms of assembly, monomer.

The protein localises to the cytoplasm. It carries out the reaction tRNA(Glu) + L-glutamate + ATP = L-glutamyl-tRNA(Glu) + AMP + diphosphate. Its function is as follows. Catalyzes the attachment of glutamate to tRNA(Glu) in a two-step reaction: glutamate is first activated by ATP to form Glu-AMP and then transferred to the acceptor end of tRNA(Glu). This Streptococcus pneumoniae serotype 19F (strain G54) protein is Glutamate--tRNA ligase.